The primary structure comprises 374 residues: Ribosomal RNA large subunit methyltransferase G (374 aa).

Belongs to the methyltransferase superfamily. RlmG family.

The protein resides in the cytoplasm. The enzyme catalyses guanosine(1835) in 23S rRNA + S-adenosyl-L-methionine = N(2)-methylguanosine(1835) in 23S rRNA + S-adenosyl-L-homocysteine + H(+). In terms of biological role, specifically methylates the guanine in position 1835 (m2G1835) of 23S rRNA. The chain is Ribosomal RNA large subunit methyltransferase G from Pseudomonas putida (strain ATCC 700007 / DSM 6899 / JCM 31910 / BCRC 17059 / LMG 24140 / F1).